The following is a 160-amino-acid chain: SsrA-binding protein (160 aa).

This sequence belongs to the SmpB family.

Its subcellular location is the cytoplasm. Required for rescue of stalled ribosomes mediated by trans-translation. Binds to transfer-messenger RNA (tmRNA), required for stable association of tmRNA with ribosomes. tmRNA and SmpB together mimic tRNA shape, replacing the anticodon stem-loop with SmpB. tmRNA is encoded by the ssrA gene; the 2 termini fold to resemble tRNA(Ala) and it encodes a 'tag peptide', a short internal open reading frame. During trans-translation Ala-aminoacylated tmRNA acts like a tRNA, entering the A-site of stalled ribosomes, displacing the stalled mRNA. The ribosome then switches to translate the ORF on the tmRNA; the nascent peptide is terminated with the 'tag peptide' encoded by the tmRNA and targeted for degradation. The ribosome is freed to recommence translation, which seems to be the essential function of trans-translation. The sequence is that of SsrA-binding protein from Enterobacter sp. (strain 638).